The following is a 415-amino-acid chain: MTELIKKGSAAKEASQFLAQASTKQKNAALLNLSNDLLAHTASLLQENNKDIIRAREKGTPETMIDRLRLTEERIKEISDAVKQVVALKDPIGEVTNMWKNEAELTIGKTRVPLGVIGIIYESRPNVTVDASVLCFKTGNAVILRGGSDAIDSNKALMSVIQDSLAASGFPRSSVQLIEDTSRETARDMMRLNRFLDVLIPRGGAKLIQTVLENATVPVIETGTGNCHIYVDKAAEKQMAIDILVNAKCSRPSVCNAAETLLIHRDVAEAFLPEMETALKEYNVELRADERAREILKDSKAATESDWEDEFLDFILAIKVVDSVDEAINHINKYGTKHSEAIISNDYATGQAFHQKVDAAAVYINASTRFTDGFAMGFGAEIGISTQKLHARGPMGLTELTSTKYIIFGDGQIRN.

Belongs to the gamma-glutamyl phosphate reductase family.

It is found in the cytoplasm. The enzyme catalyses L-glutamate 5-semialdehyde + phosphate + NADP(+) = L-glutamyl 5-phosphate + NADPH + H(+). It participates in amino-acid biosynthesis; L-proline biosynthesis; L-glutamate 5-semialdehyde from L-glutamate: step 2/2. Its function is as follows. Catalyzes the NADPH-dependent reduction of L-glutamate 5-phosphate into L-glutamate 5-semialdehyde and phosphate. The product spontaneously undergoes cyclization to form 1-pyrroline-5-carboxylate. The polypeptide is Gamma-glutamyl phosphate reductase (Listeria innocua serovar 6a (strain ATCC BAA-680 / CLIP 11262)).